A 212-amino-acid chain; its full sequence is Orotate phosphoribosyltransferase (212 aa).

5-phospho-alpha-D-ribose 1-diphosphate-binding positions include Arg97, Lys101, His103, and Glu123–Ser131. Ser127 provides a ligand contact to orotate.

The protein belongs to the purine/pyrimidine phosphoribosyltransferase family. PyrE subfamily. In terms of assembly, homodimer. Mg(2+) is required as a cofactor.

It carries out the reaction orotidine 5'-phosphate + diphosphate = orotate + 5-phospho-alpha-D-ribose 1-diphosphate. It participates in pyrimidine metabolism; UMP biosynthesis via de novo pathway; UMP from orotate: step 1/2. Functionally, catalyzes the transfer of a ribosyl phosphate group from 5-phosphoribose 1-diphosphate to orotate, leading to the formation of orotidine monophosphate (OMP). This Bacteroides fragilis (strain ATCC 25285 / DSM 2151 / CCUG 4856 / JCM 11019 / LMG 10263 / NCTC 9343 / Onslow / VPI 2553 / EN-2) protein is Orotate phosphoribosyltransferase.